The sequence spans 201 residues: 3-isopropylmalate dehydratase small subunit (201 aa).

The protein belongs to the LeuD family. LeuD type 1 subfamily. As to quaternary structure, heterodimer of LeuC and LeuD.

The enzyme catalyses (2R,3S)-3-isopropylmalate = (2S)-2-isopropylmalate. Its pathway is amino-acid biosynthesis; L-leucine biosynthesis; L-leucine from 3-methyl-2-oxobutanoate: step 2/4. In terms of biological role, catalyzes the isomerization between 2-isopropylmalate and 3-isopropylmalate, via the formation of 2-isopropylmaleate. The protein is 3-isopropylmalate dehydratase small subunit of Rhizobium meliloti (strain 1021) (Ensifer meliloti).